A 308-amino-acid polypeptide reads, in one-letter code: Nodulation protein D 1 (308 aa).

One can recognise an HTH lysR-type domain in the interval 6-63 (LDLNLLVALDALMTERNLTAAARSINLSQPAMSAAVGRLRVYFEDELFTMNGRELVLT). Positions 23–42 (LTAAARSINLSQPAMSAAVG) form a DNA-binding region, H-T-H motif.

This sequence belongs to the LysR transcriptional regulatory family.

NodD regulates the expression of the nodABCFE genes which encode other nodulation proteins. NodD is also a negative regulator of its own expression. Binds flavonoids as inducers. This is Nodulation protein D 1 (nodD1) from Rhizobium tropici.